Reading from the N-terminus, the 4334-residue chain is Cytoplasmic dynein 2 heavy chain 1 (4334 aa).

The segment at Met-1–Asp-1704 is stem. Leu-150–Gly-157 contacts ATP. Residues Gln-1026–Leu-1097 adopt a coiled-coil conformation. AAA stretches follow at residues Tyr-1705–Ile-1929, Lys-1996–Gln-2211, Gly-2299–Gly-2544, and Gly-2641–Ser-2882. ATP-binding positions include Gly-1743–Thr-1750, Gly-2034–Ser-2041, Gly-2334–Gly-2341, and Gly-2679–Arg-2686. Positions Gln-2897–Leu-3185 are stalk. Coiled coils occupy residues Leu-2930–Gln-2998 and Glu-3120–Lys-3199. AAA stretches follow at residues Leu-3260–Lys-3492 and Met-3701–Leu-3917.

It belongs to the dynein heavy chain family. The cytoplasmic dynein complex 2 is probably composed by a DHC1B homodimer and a number of D1BLIC light intermediate chains. Interacts with FAP133, FLA10 and LC8.

It localises to the cytoplasm. It is found in the cytoskeleton. Its subcellular location is the flagellum basal body. The protein resides in the cell projection. The protein localises to the cilium. It localises to the flagellum membrane. May function as a motor for intraflagellar retrograde transport. Functions in flagellar biogenesis. The polypeptide is Cytoplasmic dynein 2 heavy chain 1 (DHC1B) (Chlamydomonas reinhardtii (Chlamydomonas smithii)).